The chain runs to 144 residues: Large ribosomal subunit protein uL13 (144 aa).

It belongs to the universal ribosomal protein uL13 family. Part of the 50S ribosomal subunit.

Functionally, this protein is one of the early assembly proteins of the 50S ribosomal subunit, although it is not seen to bind rRNA by itself. It is important during the early stages of 50S assembly. The protein is Large ribosomal subunit protein uL13 of Clostridium tetani (strain Massachusetts / E88).